A 377-amino-acid polypeptide reads, in one-letter code: Chaperone protein DnaJ (377 aa).

Residues 5–70 (DYYEVLGVGR…NKKAAYDQFG (66 aa)) form the J domain. The segment at 133–211 (GLTKELRIPT…CHGDGRVEKT (79 aa)) adopts a CR-type zinc-finger fold. Zn(2+) contacts are provided by cysteine 146, cysteine 149, cysteine 163, cysteine 166, cysteine 185, cysteine 188, cysteine 199, and cysteine 202. 4 CXXCXGXG motif repeats span residues 146-153 (CDVCDGSG), 163-170 (CGTCHGQG), 185-192 (CPTCHGRG), and 199-206 (CTKCHGDG).

This sequence belongs to the DnaJ family. As to quaternary structure, homodimer. It depends on Zn(2+) as a cofactor.

The protein resides in the cytoplasm. In terms of biological role, participates actively in the response to hyperosmotic and heat shock by preventing the aggregation of stress-denatured proteins and by disaggregating proteins, also in an autonomous, DnaK-independent fashion. Unfolded proteins bind initially to DnaJ; upon interaction with the DnaJ-bound protein, DnaK hydrolyzes its bound ATP, resulting in the formation of a stable complex. GrpE releases ADP from DnaK; ATP binding to DnaK triggers the release of the substrate protein, thus completing the reaction cycle. Several rounds of ATP-dependent interactions between DnaJ, DnaK and GrpE are required for fully efficient folding. Also involved, together with DnaK and GrpE, in the DNA replication of plasmids through activation of initiation proteins. The polypeptide is Chaperone protein DnaJ (Shewanella sp. (strain MR-4)).